A 119-amino-acid chain; its full sequence is Beta-2-microglobulin (119 aa).

A signal peptide spans Met1–Ala20. Positions Pro25–Lys114 constitute an Ig-like C1-type domain. A disulfide bond links Cys45 and Cys100.

The protein belongs to the beta-2-microglobulin family. In terms of assembly, heterodimer of an alpha chain and a beta chain. Beta-2-microglobulin is the beta-chain of major histocompatibility complex class I molecules.

It localises to the secreted. Component of the class I major histocompatibility complex (MHC). Involved in the presentation of peptide antigens to the immune system. The sequence is that of Beta-2-microglobulin (B2M) from Saguinus bicolor bicolor (Pied bare-faced tamarin).